The sequence spans 164 residues: Heat shock protein beta-6 (164 aa).

The involved in stabilization of the HSPB1:HSBP6 heterodimer stretch occupies residues 1–72 (MEIPVSVQPS…PTAQVSTDPG (72 aa)). Serine 16 bears the Phosphoserine mark. One can recognise a sHSP domain in the interval 56–163 (RAPSVALPTA…PLQSPPGAAA (108 aa)). Glutamine 66 carries the post-translational modification Deamidated glutamine. Serine 157 bears the Phosphoserine mark.

Belongs to the small heat shock protein (HSP20) family. In terms of assembly, homodimer. Small heat shock proteins form high molecular mass oligomers containing variable number of monomers; these oligomers display a very flexible quaternary structure easily exchanging their subunits. Heterooligomer with HSPB1; formed through oligomerization of HSPB1:HSBP6 dimers; subunit exchange leads to formation of at least two different heterooligomeric complexes, differing in variable quantities of HSPB1 and HSPB6 homodimers in addition to HSPB1:HSPB6 heterodimers. Heterooligomer with CRYAB; large heterooligomers consist of CRYAB homodimers and HSPB5:HSPB6 heterodimers but lacking HSPB6 homodimers. Interacts with BAG3. Interacts (phosphorylated) with YWHAZ. Interacts with PDE4A and PDE4D; required for maintenance of the non-phosphorylated state of HSPB6 under basal conditions. Interacts with KDR. Interacts with PRKD1. Post-translationally, phosphorylated at Ser-16 by PKA and probably PKD1K; required to protect cardiomyocytes from apoptosis.

It is found in the cytoplasm. Its subcellular location is the nucleus. The protein resides in the secreted. Small heat shock protein which functions as a molecular chaperone probably maintaining denatured proteins in a folding-competent state. Seems to have versatile functions in various biological processes. Plays a role in regulating muscle function such as smooth muscle vasorelaxation and cardiac myocyte contractility. May regulate myocardial angiogenesis implicating KDR. Overexpression mediates cardioprotection and angiogenesis after induced damage. Stabilizes monomeric YWHAZ thereby supporting YWHAZ chaperone-like activity. The protein is Heat shock protein beta-6 (HSPB6) of Bos taurus (Bovine).